A 226-amino-acid polypeptide reads, in one-letter code: 2-C-methyl-D-erythritol 4-phosphate cytidylyltransferase (226 aa).

Belongs to the IspD/TarI cytidylyltransferase family. IspD subfamily.

It carries out the reaction 2-C-methyl-D-erythritol 4-phosphate + CTP + H(+) = 4-CDP-2-C-methyl-D-erythritol + diphosphate. The protein operates within isoprenoid biosynthesis; isopentenyl diphosphate biosynthesis via DXP pathway; isopentenyl diphosphate from 1-deoxy-D-xylulose 5-phosphate: step 2/6. In terms of biological role, catalyzes the formation of 4-diphosphocytidyl-2-C-methyl-D-erythritol from CTP and 2-C-methyl-D-erythritol 4-phosphate (MEP). The protein is 2-C-methyl-D-erythritol 4-phosphate cytidylyltransferase of Parasynechococcus marenigrum (strain WH8102).